A 273-amino-acid polypeptide reads, in one-letter code: DnaJ homolog subfamily C member 27 (273 aa).

A required for interaction with MAPK1 region spans residues 1-18 (MESNVPKRKEPLKSLRIK). Residues 23–30 (GNAEVGKS), 71–75 (DMAGH), and 134–137 (NKID) contribute to the GTP site. Positions 217–273 (DSWEMLGVRPGASREEVNKAYRKLAVLLHPDKCVAPGSEDAFKAVVNARTALLKNIK) constitute a J domain.

Belongs to the small GTPase superfamily. Rab family. As to quaternary structure, interacts directly with MAPK1 (wild-type and kinase-deficient forms). Interacts directly (in GTP-bound form) with MAP2K1 (wild-type and kinase-deficient forms).

Its subcellular location is the nucleus. Its function is as follows. GTPase which can activate the MEK/ERK pathway and induce cell transformation when overexpressed. May act as a nuclear scaffold for MAPK1, probably by association with MAPK1 nuclear export signal leading to enhanced ERK1/ERK2 signaling. The protein is DnaJ homolog subfamily C member 27 (Dnajc27) of Rattus norvegicus (Rat).